The sequence spans 534 residues: Peptide chain release factor 3 (534 aa).

Residues Ala9–Gln278 form the tr-type G domain. Residues Ser18–Thr25, Asp86–His90, and Asn140–Asp143 each bind GTP.

It belongs to the TRAFAC class translation factor GTPase superfamily. Classic translation factor GTPase family. PrfC subfamily.

Its subcellular location is the cytoplasm. Functionally, increases the formation of ribosomal termination complexes and stimulates activities of RF-1 and RF-2. It binds guanine nucleotides and has strong preference for UGA stop codons. It may interact directly with the ribosome. The stimulation of RF-1 and RF-2 is significantly reduced by GTP and GDP, but not by GMP. The sequence is that of Peptide chain release factor 3 from Xanthomonas campestris pv. campestris (strain 8004).